Here is an 805-residue protein sequence, read N- to C-terminus: Ribosome biogenesis protein ERB1 (805 aa).

Residues 1–105 (MVKGRKSQKA…SDFSEDDTKS (105 aa)) form a disordered region. The segment covering 8–22 (QKADKVTKAKKRVAD) has biased composition (basic and acidic residues). The span at 23-75 (EVDESESEPELQVEGLIDAEAESEDDESFESAEENASAEEDEEDEEDEEDSDA) shows a compositional bias: acidic residues. The required for interaction with NOP7 stretch occupies residues 264-382 (RFVPSKNEAK…LRKVPGYTES (119 aa)). Residues 382–418 (SVRERFERSLDLYLAPRMRKNKLNIDPESLIPELPSP) form a required for interaction with YTM1 region. WD repeat units follow at residues 434 to 473 (GHEG…EVYR), 482 to 522 (NPED…YDIE), 590 to 632 (VCKK…TQSP), 635 to 673 (KSKG…LVKK), 676 to 715 (PGAR…TPYK), 719 to 758 (YHDK…DMMK), and 775 to 805 (GHLG…MWTT).

The protein belongs to the WD repeat BOP1/ERB1 family. In terms of assembly, component of the NOP7 complex, composed of ERB1, NOP7 and YTM1. The complex is held together by ERB1, which interacts with NOP7 via its N-terminal domain and with YTM1 via a high-affinity interaction between the seven-bladed beta-propeller domains of the 2 proteins. The NOP7 complex associates with the 66S pre-ribosome.

It localises to the nucleus. The protein resides in the nucleolus. It is found in the nucleoplasm. In terms of biological role, component of the NOP7 complex, which is required for maturation of the 25S and 5.8S ribosomal RNAs and formation of the 60S ribosome. The sequence is that of Ribosome biogenesis protein ERB1 from Candida glabrata (strain ATCC 2001 / BCRC 20586 / JCM 3761 / NBRC 0622 / NRRL Y-65 / CBS 138) (Yeast).